Reading from the N-terminus, the 811-residue chain is Leucine--tRNA ligase (811 aa).

The 'HIGH' region motif lies at 40–50 (PYPSGRLHMGH). Residues 579–583 (KMSKS) carry the 'KMSKS' region motif. ATP is bound at residue Lys582.

It belongs to the class-I aminoacyl-tRNA synthetase family.

The protein resides in the cytoplasm. It catalyses the reaction tRNA(Leu) + L-leucine + ATP = L-leucyl-tRNA(Leu) + AMP + diphosphate. In Campylobacter fetus subsp. fetus (strain 82-40), this protein is Leucine--tRNA ligase.